The primary structure comprises 415 residues: Dynein assembly factor with WD repeat domains 1 (415 aa).

WD repeat units follow at residues 90–129 (AHILPLTNVAFNKSGSSFITGSYDRTCKVWDTASGEELHT), 132–174 (GHRN…HTFR), 175–214 (GHTAEIVCLVFNPQSTLIATGSMDTTAKLWDIQSGEEALT), 217–256 (GHAAEIISLSFNTTGDRLITGSFDHTVSVWEIPSGRRIHT), 259–298 (GHRGEISSAQFNWDCSLIATASMDKSCKLWDSLNGKCVAT), 301–340 (GHDDEVLDVTFDSTGQLVATASADGTARVYSASSRKCLAK), 343–384 (GHEG…QVLK), and 386–415 (HTDEIFSCAFNYEGNTIITGSKDNTCRIWR).

It belongs to the WD repeat WDR69 family.

The protein resides in the cytoplasm. It is found in the cytoskeleton. The protein localises to the flagellum basal body. It localises to the flagellum axoneme. In terms of biological role, required for axonemal dynein assembly and ciliary motility in ciliated organs, including Kupffer's vesicle, during embryogenesis. Facilitates the onset of robust cilia motility during development. The chain is Dynein assembly factor with WD repeat domains 1 (daw1) from Xenopus laevis (African clawed frog).